The primary structure comprises 304 residues: Peptidyl-prolyl cis-trans isomerase FKBP35 (304 aa).

A PPIase FKBP-type domain is found at 37 to 126 (GNEVTVHYVG…LFEIELLSFR (90 aa)). TPR repeat units follow at residues 144–177 (AFDIKEEGNEFFKKNEINEAIVKYKEALDFFIHT), 194–227 (ISCNLNLATCYNKNKDYPKAIDHASKVLKIDKNN), and 228–261 (VKALYKLGVANMYFGFLEEAKENLYKAASLNPNN).

The protein belongs to the FKBP-type PPIase family. As to quaternary structure, homodimer. Interacts (via TPR repeats) with HSP90 (probably via MEEVD motif).

It is found in the cytoplasm. It localises to the nucleus. It catalyses the reaction [protein]-peptidylproline (omega=180) = [protein]-peptidylproline (omega=0). Inhibited by FK506 and its derivates, such as ascomycin, and rapamycin. FK506 and rapamycin inhibit peptidylprolyl isomerase activity but not chaperone activity. Inhibited by N-(2-ethyl-phenyl)-2-(3H-imidazao [4, 5-b] pyridin-2-yl-sulfanyl)-acetamide (D44). Not inhibited by cyclosporin A. Inhibition of calcineurin phosphatase activity is enhanced by FK506. Functionally, has peptidylprolyl isomerase (PPIase) and co-chaperone activities. Assists protein folding by catalyzing the peptidyl conversion of cis and trans rotamers of the prolyl amide bond of protein substrates. Inhibits calcineurin phosphatase activity in vitro. Plays an essential role in merozoite egress from host erythrocytes. In Plasmodium falciparum (isolate 3D7), this protein is Peptidyl-prolyl cis-trans isomerase FKBP35.